Consider the following 344-residue polypeptide: Ketol-acid reductoisomerase (NADP(+)) (344 aa).

The 180-residue stretch at 2-181 (EKIYYDADIS…GAGRAGILTT (180 aa)) folds into the KARI N-terminal Rossmann domain. NADP(+) contacts are provided by residues 25-28 (YGSQ), Arg48, Ser52, and 82-85 (DERQ). His107 is a catalytic residue. Gly133 lines the NADP(+) pocket. Residues 182-327 (TFREETETDL…RKLRSMMPFI (146 aa)) enclose the KARI C-terminal knotted domain. Positions 190, 194, 226, and 230 each coordinate Mg(2+). Ser251 is a substrate binding site.

Belongs to the ketol-acid reductoisomerase family. Mg(2+) is required as a cofactor.

It catalyses the reaction (2R)-2,3-dihydroxy-3-methylbutanoate + NADP(+) = (2S)-2-acetolactate + NADPH + H(+). It carries out the reaction (2R,3R)-2,3-dihydroxy-3-methylpentanoate + NADP(+) = (S)-2-ethyl-2-hydroxy-3-oxobutanoate + NADPH + H(+). Its pathway is amino-acid biosynthesis; L-isoleucine biosynthesis; L-isoleucine from 2-oxobutanoate: step 2/4. The protein operates within amino-acid biosynthesis; L-valine biosynthesis; L-valine from pyruvate: step 2/4. Functionally, involved in the biosynthesis of branched-chain amino acids (BCAA). Catalyzes an alkyl-migration followed by a ketol-acid reduction of (S)-2-acetolactate (S2AL) to yield (R)-2,3-dihydroxy-isovalerate. In the isomerase reaction, S2AL is rearranged via a Mg-dependent methyl migration to produce 3-hydroxy-3-methyl-2-ketobutyrate (HMKB). In the reductase reaction, this 2-ketoacid undergoes a metal-dependent reduction by NADPH to yield (R)-2,3-dihydroxy-isovalerate. This is Ketol-acid reductoisomerase (NADP(+)) from Alicyclobacillus acidocaldarius subsp. acidocaldarius (strain ATCC 27009 / DSM 446 / BCRC 14685 / JCM 5260 / KCTC 1825 / NBRC 15652 / NCIMB 11725 / NRRL B-14509 / 104-IA) (Bacillus acidocaldarius).